A 412-amino-acid polypeptide reads, in one-letter code: Probable histone-binding protein rba-1 (412 aa).

WD repeat units lie at residues Asn-117 to Lys-157, Gly-169 to Gly-209, Gly-219 to Thr-259, Gly-262 to Tyr-302, His-306 to Ser-346, and Gly-365 to Glu-405.

Belongs to the WD repeat RBAP46/RBAP48/MSI1 family. As to quaternary structure, binds directly to helix 1 of the histone fold of histone H4, a region that is not accessible when H4 is in chromatin. Interacts with zft-11; the interaction is required to suppress the activation of non-neuronal genes in neurons.

It is found in the nucleus. Its function is as follows. Core histone-binding subunit that may target chromatin assembly factors, chromatin remodeling factors and histone deacetylases to their histone substrates in a manner that is regulated by nucleosomal DNA. Plays a role in regulating cell cycle progression. Required to repress the induction of vulval development by Ras signaling. In association with the zinc finger protein ztf-11, negatively regulates the expression of non-neuronal genes during neurogenesis. The chain is Probable histone-binding protein rba-1 from Caenorhabditis elegans.